We begin with the raw amino-acid sequence, 614 residues long: UvrABC system protein C (614 aa).

The GIY-YIG domain maps to 12–91 (ESPGVYLMKG…IKKHRPRYNL (80 aa)). In terms of domain architecture, UVR spans 201–236 (RDLLKTYRERMASAAANERYEEAARYRDLIRAIEVT).

It belongs to the UvrC family. As to quaternary structure, interacts with UvrB in an incision complex.

The protein resides in the cytoplasm. Functionally, the UvrABC repair system catalyzes the recognition and processing of DNA lesions. UvrC both incises the 5' and 3' sides of the lesion. The N-terminal half is responsible for the 3' incision and the C-terminal half is responsible for the 5' incision. The sequence is that of UvrABC system protein C from Geobacter metallireducens (strain ATCC 53774 / DSM 7210 / GS-15).